The chain runs to 351 residues: (S)-coclaurine N-methyltransferase (351 aa).

S-adenosyl-L-methionine contacts are provided by residues 91 to 92, 126 to 134, 130 to 132, and 153 to 158; these read QS, VLDLGCGLG, GCG, and TSSVEQ. Residue C326 is part of the active site.

It belongs to the CFA/CMAS family. As to expression, expressed in roots, stems, flower buds and at lower levels, in leaves. Restricted to sieve elements of the phloem adjacent or proximal to laticifers.

It is found in the cytoplasm. The enzyme catalyses (S)-coclaurine + S-adenosyl-L-methionine = (S)-N-methylcoclaurine + S-adenosyl-L-homocysteine + H(+). The protein operates within alkaloid biosynthesis; (S)-reticuline biosynthesis; (S)-reticuline from (S)-norcoclaurine: step 2/4. In terms of biological role, involved in the biosynthesis of benzylisoquinoline alkaloids. N-methyltransferase methylating (S)-coclaurine. 4'-O-methylcoclaurine and norlaudanine can also be used as substrates. This is (S)-coclaurine N-methyltransferase from Papaver somniferum (Opium poppy).